The chain runs to 301 residues: ATP synthase gamma chain (301 aa).

The protein belongs to the ATPase gamma chain family. F-type ATPases have 2 components, CF(1) - the catalytic core - and CF(0) - the membrane proton channel. CF(1) has five subunits: alpha(3), beta(3), gamma(1), delta(1), epsilon(1). CF(0) has three main subunits: a, b and c.

It localises to the cell inner membrane. Functionally, produces ATP from ADP in the presence of a proton gradient across the membrane. The gamma chain is believed to be important in regulating ATPase activity and the flow of protons through the CF(0) complex. The sequence is that of ATP synthase gamma chain from Helicobacter pylori (strain J99 / ATCC 700824) (Campylobacter pylori J99).